The sequence spans 616 residues: Dihydroxy-acid dehydratase (616 aa).

D81 contacts Mg(2+). C122 contributes to the [2Fe-2S] cluster binding site. Positions 123 and 124 each coordinate Mg(2+). An N6-carboxylysine modification is found at K124. C195 is a binding site for [2Fe-2S] cluster. Residue E491 coordinates Mg(2+). The active-site Proton acceptor is the S517.

This sequence belongs to the IlvD/Edd family. Homodimer. [2Fe-2S] cluster serves as cofactor. It depends on Mg(2+) as a cofactor.

It carries out the reaction (2R)-2,3-dihydroxy-3-methylbutanoate = 3-methyl-2-oxobutanoate + H2O. The catalysed reaction is (2R,3R)-2,3-dihydroxy-3-methylpentanoate = (S)-3-methyl-2-oxopentanoate + H2O. It functions in the pathway amino-acid biosynthesis; L-isoleucine biosynthesis; L-isoleucine from 2-oxobutanoate: step 3/4. The protein operates within amino-acid biosynthesis; L-valine biosynthesis; L-valine from pyruvate: step 3/4. Its function is as follows. Functions in the biosynthesis of branched-chain amino acids. Catalyzes the dehydration of (2R,3R)-2,3-dihydroxy-3-methylpentanoate (2,3-dihydroxy-3-methylvalerate) into 2-oxo-3-methylpentanoate (2-oxo-3-methylvalerate) and of (2R)-2,3-dihydroxy-3-methylbutanoate (2,3-dihydroxyisovalerate) into 2-oxo-3-methylbutanoate (2-oxoisovalerate), the penultimate precursor to L-isoleucine and L-valine, respectively. In Escherichia coli (strain K12 / MC4100 / BW2952), this protein is Dihydroxy-acid dehydratase.